Reading from the N-terminus, the 1246-residue chain is HMG2-induced ER-remodeling protein 1 (1246 aa).

Disordered regions lie at residues 19–241, 263–288, and 816–836; these read KGKR…GSLT, HHIQ…LPPI, and MPDA…KDEK. A compositionally biased stretch (low complexity) spans 27 to 41; sequence KSAASTRTSEATTTS. Positions 58 to 95 are enriched in polar residues; it reads TIASPQRPLSGQNVNNELSNSKPAVSAEKVSQQGQVPT. The residue at position 102 (S102) is a Phosphoserine. At T128 the chain carries Phosphothreonine. Composition is skewed to low complexity over residues 154–163 and 211–230; these read RSSSISTSLN and SKIS…PSSS. The span at 271–282 shows a compositional bias: basic and acidic residues; that stretch reads SGREQDSPHSES. At S277 the chain carries Phosphoserine. Position 1013 is a phosphoserine (S1013). Composition is skewed to polar residues over residues 1109 to 1133 and 1200 to 1215; these read SSRH…TPDS and SRSP…QQKA. Disordered regions lie at residues 1109-1157 and 1192-1224; these read SSRH…LPKI and SLYG…LVED. Residue T1130 is modified to Phosphothreonine. S1200, S1204, and S1207 each carry phosphoserine.

The protein belongs to the GIP3/HER1 family. As to quaternary structure, may interact with ribosomes.

The protein resides in the cytoplasm. In terms of biological role, required for HMG2-induced endoplasmic reticulum-remodeling. This chain is HMG2-induced ER-remodeling protein 1 (HER1), found in Saccharomyces cerevisiae (strain ATCC 204508 / S288c) (Baker's yeast).